The chain runs to 345 residues: Type II methyltransferase M.AplI (345 aa).

The region spanning 25 to 325 (LVVLDLFAGC…KSVKMTLENK (301 aa)) is the SAM-dependent MTase C5-type domain. Cys93 is a catalytic residue.

Belongs to the class I-like SAM-binding methyltransferase superfamily. C5-methyltransferase family.

It catalyses the reaction a 2'-deoxycytidine in DNA + S-adenosyl-L-methionine = a 5-methyl-2'-deoxycytidine in DNA + S-adenosyl-L-homocysteine + H(+). In terms of biological role, a methylase, recognizes the double-stranded sequence 5'-CTGCAG-3', methylates C-4 on both strands, and protects the DNA from cleavage by the AplI endonuclease. This is Type II methyltransferase M.AplI (aplIM) from Arthrospira platensis (strain NIES-39 / UTEX 3086 / IAM M-135) (Spirulina platensis).